The primary structure comprises 189 residues: GTP cyclohydrolase 1 (189 aa).

Residues Cys79, His82, and Cys150 each coordinate Zn(2+).

Belongs to the GTP cyclohydrolase I family. As to quaternary structure, homomer.

The enzyme catalyses GTP + H2O = 7,8-dihydroneopterin 3'-triphosphate + formate + H(+). It participates in cofactor biosynthesis; 7,8-dihydroneopterin triphosphate biosynthesis; 7,8-dihydroneopterin triphosphate from GTP: step 1/1. In Rickettsia peacockii (strain Rustic), this protein is GTP cyclohydrolase 1.